We begin with the raw amino-acid sequence, 181 residues long: Large ribosomal subunit protein uL5 (181 aa).

The protein belongs to the universal ribosomal protein uL5 family. As to quaternary structure, part of the 50S ribosomal subunit; contacts the 5S rRNA and probably tRNA. Forms a bridge to the 30S subunit in the 70S ribosome.

In terms of biological role, this is one of the proteins that bind and probably mediate the attachment of the 5S RNA into the large ribosomal subunit, where it forms part of the central protuberance. In the 70S ribosome it contacts protein S13 of the 30S subunit (bridge B1b), connecting the 2 subunits; this bridge is implicated in subunit movement. May contact the P site tRNA; the 5S rRNA and some of its associated proteins might help stabilize positioning of ribosome-bound tRNAs. This is Large ribosomal subunit protein uL5 from Methanococcus aeolicus (strain ATCC BAA-1280 / DSM 17508 / OCM 812 / Nankai-3).